A 125-amino-acid polypeptide reads, in one-letter code: Small ribosomal subunit protein uS13 (125 aa).

The interval 95–125 is disordered; the sequence is GLPVNGQRTRTNARTRKGVKKTVANKKKATK. Over residues 105–125 the composition is skewed to basic residues; the sequence is TNARTRKGVKKTVANKKKATK.

The protein belongs to the universal ribosomal protein uS13 family. In terms of assembly, part of the 30S ribosomal subunit. Forms a loose heterodimer with protein S19. Forms two bridges to the 50S subunit in the 70S ribosome.

Located at the top of the head of the 30S subunit, it contacts several helices of the 16S rRNA. In the 70S ribosome it contacts the 23S rRNA (bridge B1a) and protein L5 of the 50S subunit (bridge B1b), connecting the 2 subunits; these bridges are implicated in subunit movement. Contacts the tRNAs in the A and P-sites. The polypeptide is Small ribosomal subunit protein uS13 (Leptospira biflexa serovar Patoc (strain Patoc 1 / Ames)).